The chain runs to 366 residues: Ribosomal RNA large subunit methyltransferase M (366 aa).

S-adenosyl-L-methionine is bound by residues serine 188, 221-224 (CPGG), aspartate 240, aspartate 260, and aspartate 277. The active-site Proton acceptor is lysine 306.

This sequence belongs to the class I-like SAM-binding methyltransferase superfamily. RNA methyltransferase RlmE family. RlmM subfamily. Monomer.

It is found in the cytoplasm. It catalyses the reaction cytidine(2498) in 23S rRNA + S-adenosyl-L-methionine = 2'-O-methylcytidine(2498) in 23S rRNA + S-adenosyl-L-homocysteine + H(+). Its function is as follows. Catalyzes the 2'-O-methylation at nucleotide C2498 in 23S rRNA. In Escherichia coli O127:H6 (strain E2348/69 / EPEC), this protein is Ribosomal RNA large subunit methyltransferase M.